Reading from the N-terminus, the 224-residue chain is UPF0758 protein PFL_6051 (224 aa).

Residues 102 to 224 enclose the MPN domain; that stretch reads ALENPLVVRD…PLSMAEYGWI (123 aa). 3 residues coordinate Zn(2+): H173, H175, and D186. The JAMM motif motif lies at 173–186; the sequence is HNHPSGICEPSPAD.

The protein belongs to the UPF0758 family.

The protein is UPF0758 protein PFL_6051 of Pseudomonas fluorescens (strain ATCC BAA-477 / NRRL B-23932 / Pf-5).